Consider the following 505-residue polypeptide: Methylmalonyl-CoA carboxyltransferase 5S subunit (505 aa).

The 263-residue stretch at 14 to 276 (VGITELVLRD…TTNLDYDRLH (263 aa)) folds into the Pyruvate carboxyltransferase domain. Residues 22 to 26 (RDAHQ), Ala-59, and Lys-184 contribute to the substrate site. Asp-23 is a binding site for Co(2+). Co(2+)-binding residues include Lys-184, His-215, and His-217. Lys-184 is modified (N6-carboxylysine; partial).

Homodimer. Transcarboxylase is composed of three subunits: 1.3S, 5S, and 12S. The core of the enzyme is composed of six 12S subunits. On each side of the core there are three pairs of 5S subunits. Each 5S dimer is attached to the core by two 1.3S subunits. Thus the total number of chains is 30 (6 + 12 + 12). Co(2+) serves as cofactor. Post-translationally, lys-184 is carboxylated in the free enzyme and helps to coordinate the cobalt ion. Lys-184 is partially carboxylated in the complex with pyruvate, but is not carboxylated in the oxaloacetate-bound form.

It carries out the reaction (S)-methylmalonyl-CoA + pyruvate = propanoyl-CoA + oxaloacetate. In terms of biological role, the 5S subunit specifically catalyzes the transfer of the carboxyl group from biotin of the 1.3S subunit to pyruvate to form oxaloacetate and 1.3S biotin. This is Methylmalonyl-CoA carboxyltransferase 5S subunit from Propionibacterium freudenreichii subsp. shermanii.